We begin with the raw amino-acid sequence, 125 residues long: Oxytocin-neurophysin 1 (125 aa).

The N-terminal stretch at 1–19 (MACPSLACCLLGLLALTSA) is a signal peptide. A disulfide bond links C20 and C25. A Glycine amide modification is found at G28. 7 cysteine pairs are disulfide-bonded: C41-C85, C44-C58, C52-C75, C59-C65, C92-C104, C98-C116, and C105-C110.

The protein belongs to the vasopressin/oxytocin family. As to quaternary structure, interacts with oxytocin receptor (Ki=1.5 nM). Interacts with vasopressin V1aR/AVPR1A (Ki=37 nM), V1bR/AVPR1B (Ki=222 nM), and V2R/AVPR2 receptors (Ki=823 nM).

In terms of biological role, neurophysin 1 specifically binds oxytocin. Oxytocin causes contraction of the smooth muscle of the uterus and of the mammary gland. Acts by binding to oxytocin receptor (OXTR). This is Oxytocin-neurophysin 1 (Oxt) from Rattus norvegicus (Rat).